Here is a 396-residue protein sequence, read N- to C-terminus: Probable glucan endo-1,6-beta-glucosidase B (396 aa).

Positions M1–A17 are cleaved as a signal peptide. Residue N30 is glycosylated (N-linked (GlcNAc...) asparagine). E219 serves as the catalytic Proton donor. A glycan (N-linked (GlcNAc...) asparagine) is linked at N272. Catalysis depends on E320, which acts as the Nucleophile.

It belongs to the glycosyl hydrolase 5 (cellulase A) family.

The protein localises to the secreted. The enzyme catalyses Random hydrolysis of (1-&gt;6)-linkages in (1-&gt;6)-beta-D-glucans.. Beta-glucanases participate in the metabolism of beta-glucan, the main structural component of the cell wall. Acts on lutean, pustulan and 1,6-oligo-beta-D-glucosides. In Aspergillus fumigatus (strain ATCC MYA-4609 / CBS 101355 / FGSC A1100 / Af293) (Neosartorya fumigata), this protein is Probable glucan endo-1,6-beta-glucosidase B (exgB).